A 761-amino-acid polypeptide reads, in one-letter code: Zinc finger protein 287 (761 aa).

Residues 49 to 131 (RQNFRNFPYP…TLVEDLTQIL (83 aa)) form the SCAN box domain. The tract at residues 134–154 (EAPQNSTLSQDTPEEDPRGKH) is disordered. The KRAB domain occupies 170 to 238 (MTFKDVAVDI…IKEILEGPSP (69 aa)). 14 C2H2-type zinc fingers span residues 368–390 (YKCN…QSTH), 396–418 (YECE…QRMH), 424–446 (YECH…QRIH), 452–474 (YKCD…QRTH), 480–502 (YKCL…QRVH), 508–530 (YICN…QKIH), 536–558 (YKCN…QRIH), 564–586 (YKCN…QTTH), 592–614 (YICN…HRTH), 620–642 (YKCS…QRIH), 648–670 (FKCN…QRIH), 676–698 (YKCN…QRTH), 704–726 (YKCN…QRIH), and 732–754 (YACR…QRVH).

This sequence belongs to the krueppel C2H2-type zinc-finger protein family.

The protein localises to the nucleus. May be involved in transcriptional regulation. The chain is Zinc finger protein 287 from Homo sapiens (Human).